We begin with the raw amino-acid sequence, 599 residues long: Glucose-6-phosphate 1-dehydrogenase 3, chloroplastic (599 aa).

The segment covering 1–18 has biased composition (low complexity); the sequence is MSSLSCPTYRSRTSSSSP. Residues 1–23 form a disordered region; the sequence is MSSLSCPTYRSRTSSSSPFLSNH. Residues 1 to 66 constitute a chloroplast transit peptide; it reads MSSLSCPTYR…RSQRRSVQSS (66 aa). Val-67 is subject to N-acetylvaline. Residues 119–126 and Arg-153 each bind NADP(+); that span reads GASGDLAK. Cys-171 and Cys-179 are oxidised to a cystine. Lys-256 provides a ligand contact to NADP(+). Residues Lys-256, 286–290, Glu-324, and Asp-343 contribute to the D-glucose 6-phosphate site; that span reads HYLGK. The Proton acceptor role is filled by His-348. Position 441 (Lys-441) interacts with NADP(+). Positions 444 and 449 each coordinate D-glucose 6-phosphate. Residues Arg-454 and Arg-483 each coordinate NADP(+). Position 485 (Gln-485) interacts with D-glucose 6-phosphate. NADP(+)-binding positions include 491 to 493 and Arg-576; that span reads YLK.

Belongs to the glucose-6-phosphate dehydrogenase family. As to quaternary structure, forms homodimer. Interacts with G6PD1. In terms of tissue distribution, expressed in roots, flowers and siliques.

Its subcellular location is the plastid. The protein localises to the chloroplast stroma. The catalysed reaction is D-glucose 6-phosphate + NADP(+) = 6-phospho-D-glucono-1,5-lactone + NADPH + H(+). The protein operates within carbohydrate degradation; pentose phosphate pathway; D-ribulose 5-phosphate from D-glucose 6-phosphate (oxidative stage): step 1/3. Its activity is regulated as follows. Regulated by metabolites. Post-translationally inactivated by cysteine-mediated redox modification via the ferredoxin-thioredoxin system in the light and this avoids futile cycles with photosynthetic CO2 fixation. Its function is as follows. Catalyzes the rate-limiting step of the oxidative pentose-phosphate pathway, which represents a route for the dissimilation of carbohydrates besides glycolysis. The main function of this enzyme is to provide reducing power (NADPH) and pentose phosphates for fatty acid and nucleic acid synthesis which are involved in membrane synthesis and cell division. The sequence is that of Glucose-6-phosphate 1-dehydrogenase 3, chloroplastic from Arabidopsis thaliana (Mouse-ear cress).